The primary structure comprises 249 residues: Triosephosphate isomerase (249 aa).

Substrate contacts are provided by Asn-12 and Lys-14. The residue at position 14 (Lys-14) is an N6-acetyllysine. Tyr-68 bears the 3'-nitrotyrosine mark. Ser-80 carries the phosphoserine modification. The active-site Electrophile is the His-96. At Ser-106 the chain carries Phosphoserine. A Glycyl lysine isopeptide (Lys-Gly) (interchain with G-Cter in SUMO1) cross-link involves residue Lys-142. Lys-149 bears the N6-succinyllysine mark. At Lys-156 the chain carries N6-acetyllysine; alternate. Lys-156 carries the post-translational modification N6-succinyllysine; alternate. Position 159 is a phosphoserine (Ser-159). The active-site Proton acceptor is Glu-166. A Phosphothreonine modification is found at Thr-173. N6-acetyllysine; alternate is present on Lys-194. Lys-194 bears the N6-succinyllysine; alternate mark. Lys-194 bears the N6-methyllysine; alternate mark. Phosphoserine is present on Ser-198. 3'-nitrotyrosine is present on Tyr-209. Ser-212 carries the post-translational modification Phosphoserine. A Phosphothreonine modification is found at Thr-214. Ser-223 bears the Phosphoserine mark. N6-acetyllysine is present on Lys-238.

Belongs to the triosephosphate isomerase family. In terms of assembly, homodimer.

It localises to the cytoplasm. It catalyses the reaction dihydroxyacetone phosphate = methylglyoxal + phosphate. The catalysed reaction is D-glyceraldehyde 3-phosphate = dihydroxyacetone phosphate. It participates in carbohydrate degradation; glycolysis; D-glyceraldehyde 3-phosphate from glycerone phosphate: step 1/1. The protein operates within carbohydrate biosynthesis; gluconeogenesis. Functionally, triosephosphate isomerase is an extremely efficient metabolic enzyme that catalyzes the interconversion between dihydroxyacetone phosphate (DHAP) and D-glyceraldehyde-3-phosphate (G3P) in glycolysis and gluconeogenesis. It is also responsible for the non-negligible production of methylglyoxal a reactive cytotoxic side-product that modifies and can alter proteins, DNA and lipids. This is Triosephosphate isomerase (TPI1) from Canis lupus familiaris (Dog).